The primary structure comprises 229 residues: CMRF35-like molecule 6 (229 aa).

An N-terminal signal peptide occupies residues 1–21 (MNPRVIRLWLPSAVLLSLVPG). The 105-residue stretch at 22–126 (HFPVRGPSTV…FYDAYLQIDK (105 aa)) folds into the Ig-like V-type domain. Residues 22–188 (HFPVRGPSTV…ELRSLLSSPH (167 aa)) lie on the Extracellular side of the membrane. C43 and C110 are joined by a disulfide. 2 N-linked (GlcNAc...) asparagine glycosylation sites follow: N90 and N99. Residues 189 to 209 (FWILVSLKLPLFLSMLGALLW) form a helical membrane-spanning segment. Over 210-229 (VNRPQRCSGGSSAWPCYENQ) the chain is Cytoplasmic.

Belongs to the CD300 family.

The protein resides in the cell membrane. This is CMRF35-like molecule 6 (Cd300c) from Mus musculus (Mouse).